The sequence spans 318 residues: 1-phosphofructokinase (318 aa).

Residues 228–233 (SMGTEG) and 259–260 (GD) each bind ATP. D260 functions as the Proton acceptor in the catalytic mechanism.

This sequence belongs to the carbohydrate kinase PfkB family.

It catalyses the reaction beta-D-fructose 1-phosphate + ATP = beta-D-fructose 1,6-bisphosphate + ADP + H(+). In terms of biological role, catalyzes the ATP-dependent phosphorylation of fructose-l-phosphate to fructose-l,6-bisphosphate. In Xanthomonas campestris pv. campestris (strain ATCC 33913 / DSM 3586 / NCPPB 528 / LMG 568 / P 25), this protein is 1-phosphofructokinase.